The sequence spans 508 residues: Lysine--tRNA ligase (508 aa).

Positions 418 and 425 each coordinate Mg(2+).

The protein belongs to the class-II aminoacyl-tRNA synthetase family. Homodimer. Requires Mg(2+) as cofactor.

The protein localises to the cytoplasm. The catalysed reaction is tRNA(Lys) + L-lysine + ATP = L-lysyl-tRNA(Lys) + AMP + diphosphate. This Burkholderia pseudomallei (strain 668) protein is Lysine--tRNA ligase.